Consider the following 242-residue polypeptide: Small ribosomal subunit protein uS3 (242 aa).

Residues 39 to 110 (IRRFIHKKYG…QVRINVVEVE (72 aa)) enclose the KH type-2 domain. The segment at 217–242 (TMPVGASPRRRGNRRPQQFEDRSNEG) is disordered. Residues 233-242 (QQFEDRSNEG) show a composition bias toward basic and acidic residues.

Belongs to the universal ribosomal protein uS3 family. In terms of assembly, part of the 30S ribosomal subunit. Forms a tight complex with proteins S10 and S14.

Its function is as follows. Binds the lower part of the 30S subunit head. Binds mRNA in the 70S ribosome, positioning it for translation. The chain is Small ribosomal subunit protein uS3 from Prochlorococcus marinus (strain MIT 9313).